The following is a 420-amino-acid chain: Vasopressin V1a receptor (420 aa).

A disordered region spans residues methionine 1 to valine 45. The Extracellular segment spans residues methionine 1–glutamate 54. Asparagine 27 carries N-linked (GlcNAc...) asparagine glycosylation. A compositionally biased stretch (basic and acidic residues) spans alanine 32–valine 45. A helical membrane pass occupies residues isoleucine 55–alanine 75. Topologically, residues leucine 76 to histidine 92 are cytoplasmic. The chain crosses the membrane as a helical span at residues leucine 93 to isoleucine 113. The Extracellular segment spans residues threonine 114–arginine 125. Residues cysteine 124 and cysteine 205 are joined by a disulfide bond. A helical membrane pass occupies residues valine 126–threonine 146. Over alanine 147–arginine 168 the chain is Cytoplasmic. Residues leucine 169 to phenylalanine 189 form a helical membrane-spanning segment. The Extracellular portion of the chain corresponds to serine 190–glycine 225. N-linked (GlcNAc...) asparagine glycosylation occurs at asparagine 198. The helical transmembrane segment at valine 226–tryptophan 246 threads the bilayer. At arginine 247 to methionine 294 the chain is on the cytoplasmic side. A helical transmembrane segment spans residues threonine 295–tryptophan 315. The Extracellular segment spans residues serine 316–serine 331. A helical transmembrane segment spans residues isoleucine 332–phenylalanine 352. At phenylalanine 353 to threonine 420 the chain is on the cytoplasmic side. Residues cysteine 367 and cysteine 368 are each lipidated (S-palmitoyl cysteine). The tract at residues aspartate 379–arginine 411 is disordered. A compositionally biased stretch (polar residues) spans arginine 385–tryptophan 403. Serine 406 is modified (phosphoserine).

The protein belongs to the G-protein coupled receptor 1 family. Vasopressin/oxytocin receptor subfamily.

Its subcellular location is the cell membrane. Receptor for arginine vasopressin. The activity of this receptor is mediated by G proteins which activate a phosphatidyl-inositol-calcium second messenger system. Involved in social memory formation. The sequence is that of Vasopressin V1a receptor (Avpr1a) from Microtus montanus (Montane vole).